The following is a 496-amino-acid chain: ADP-dependent glucokinase (496 aa).

Residues 1-22 form the signal peptide; that stretch reads MALWRGSACAGFLALAVGCVFL. Residues 52-496 enclose the ADPK domain; sequence SPESRLAAAW…GLFYSEARPD (445 aa). Mg(2+)-binding residues include Glu297, Glu328, and Asp481. The Proton acceptor role is filled by Asp481.

This sequence belongs to the ADP-dependent glucokinase family. In terms of assembly, monomer. It depends on Mg(2+) as a cofactor.

The protein localises to the secreted. It catalyses the reaction D-glucose + ADP = D-glucose 6-phosphate + AMP + H(+). It participates in carbohydrate degradation; glycolysis. In terms of biological role, catalyzes the phosphorylation of D-glucose to D-glucose 6-phosphate using ADP as the phosphate donor. GDP and CDP can replace ADP, but with reduced efficiency. This Mus musculus (Mouse) protein is ADP-dependent glucokinase (Adpgk).